The chain runs to 448 residues: Antizyme inhibitor 1 (448 aa).

Belongs to the Orn/Lys/Arg decarboxylase class-II family. ODC antizyme inhibitor subfamily. As to quaternary structure, monomer. Interacts with OAZ1 and OAZ3; this interaction disrupts the interaction between the antizyme and ODC1. Ubiquitinated, leading to its proteasomal degradation; a process that is reduced in presence of antizyme OAZ1.

It is found in the nucleus. In terms of biological role, antizyme inhibitor (AZI) protein that positively regulates ornithine decarboxylase (ODC) activity and polyamine uptake. AZI is an enzymatically inactive ODC homolog that counteracts the negative effect of ODC antizymes (AZs) OAZ1, OAZ2 and OAZ3 on ODC activity by competing with ODC for antizyme-binding. Inhibits antizyme-dependent ODC degradation and releases ODC monomers from their inactive complex with antizymes, leading to formation of the catalytically active ODC homodimer and restoring polyamine production. The chain is Antizyme inhibitor 1 (AZIN1) from Pongo abelii (Sumatran orangutan).